Here is a 91-residue protein sequence, read N- to C-terminus: Small ribosomal subunit protein bS20 (91 aa).

Over residues 1-18 (MPLHKSAEKRLRQSEKRN) the composition is skewed to basic and acidic residues. The interval 1–24 (MPLHKSAEKRLRQSEKRNVRNRAR) is disordered.

This sequence belongs to the bacterial ribosomal protein bS20 family.

In terms of biological role, binds directly to 16S ribosomal RNA. The polypeptide is Small ribosomal subunit protein bS20 (Chlorobium phaeobacteroides (strain DSM 266 / SMG 266 / 2430)).